We begin with the raw amino-acid sequence, 211 residues long: Proteasome subunit beta (211 aa).

Positions 1 to 9 (MSEAETLKG) are cleaved as a propeptide — removed in mature form; by autocatalysis. Thr10 acts as the Nucleophile in catalysis.

The protein belongs to the peptidase T1B family. In terms of assembly, the 20S proteasome core is composed of 14 alpha and 14 beta subunits that assemble into four stacked heptameric rings, resulting in a barrel-shaped structure. The two inner rings, each composed of seven catalytic beta subunits, are sandwiched by two outer rings, each composed of seven alpha subunits. The catalytic chamber with the active sites is on the inside of the barrel. Has a gated structure, the ends of the cylinder being occluded by the N-termini of the alpha-subunits. Is capped at one or both ends by the proteasome regulatory ATPase, PAN.

It is found in the cytoplasm. The enzyme catalyses Cleavage of peptide bonds with very broad specificity.. With respect to regulation, the formation of the proteasomal ATPase PAN-20S proteasome complex, via the docking of the C-termini of PAN into the intersubunit pockets in the alpha-rings, triggers opening of the gate for substrate entry. Interconversion between the open-gate and close-gate conformations leads to a dynamic regulation of the 20S proteasome proteolysis activity. Functionally, component of the proteasome core, a large protease complex with broad specificity involved in protein degradation. In Methanosphaerula palustris (strain ATCC BAA-1556 / DSM 19958 / E1-9c), this protein is Proteasome subunit beta.